A 1063-amino-acid chain; its full sequence is DNA-directed RNA polymerase subunit beta (1063 aa).

The protein belongs to the RNA polymerase beta chain family. In plastids the minimal PEP RNA polymerase catalytic core is composed of four subunits: alpha, beta, beta', and beta''. When a (nuclear-encoded) sigma factor is associated with the core the holoenzyme is formed, which can initiate transcription.

It is found in the plastid. The protein localises to the chloroplast. The catalysed reaction is RNA(n) + a ribonucleoside 5'-triphosphate = RNA(n+1) + diphosphate. Functionally, DNA-dependent RNA polymerase catalyzes the transcription of DNA into RNA using the four ribonucleoside triphosphates as substrates. This chain is DNA-directed RNA polymerase subunit beta, found in Zygnema circumcarinatum (Green alga).